Reading from the N-terminus, the 69-residue chain is Pleurain-A1 (69 aa).

Residues 1–18 (MFTLKKTLLLLFFLGTIS) form the signal peptide. Positions 19–43 (ISLCKQERDADEDDGRKMTEEEVKR) are excised as a propeptide. Cysteines 63 and 69 form a disulfide.

In terms of tissue distribution, expressed by the skin glands.

It is found in the secreted. Functionally, antimicrobial peptide. Has activity against the Gram-positive bacterium S.aureus ATCC2592 (MIC=15 ug/ml), the Gram-negative bacteria E.coli ATCC25922 (MIC=60 ug/ml), B.dysenteriae (MIC=120 ug/ml), H.pylori NTCT11637 (MIC=30 ug/ml), and the fungus C.albicans ATCC2002 (MIC=30 ug/ml). Has little hemolytic activity on rabbit red blood cells. This chain is Pleurain-A1, found in Nidirana pleuraden (Yunnan pond frog).